The sequence spans 426 residues: UDP-N-acetylglucosamine 1-carboxyvinyltransferase (426 aa).

Residue K22–N23 participates in phosphoenolpyruvate binding. UDP-N-acetyl-alpha-D-glucosamine is bound at residue R93. The active-site Proton donor is the D117. Residues D312 and M334 each contribute to the UDP-N-acetyl-alpha-D-glucosamine site.

The protein belongs to the EPSP synthase family. MurA subfamily.

The protein localises to the cytoplasm. It carries out the reaction phosphoenolpyruvate + UDP-N-acetyl-alpha-D-glucosamine = UDP-N-acetyl-3-O-(1-carboxyvinyl)-alpha-D-glucosamine + phosphate. It participates in cell wall biogenesis; peptidoglycan biosynthesis. In terms of biological role, cell wall formation. Adds enolpyruvyl to UDP-N-acetylglucosamine. In Treponema denticola (strain ATCC 35405 / DSM 14222 / CIP 103919 / JCM 8153 / KCTC 15104), this protein is UDP-N-acetylglucosamine 1-carboxyvinyltransferase.